Reading from the N-terminus, the 61-residue chain is Small ribosomal subunit protein uS14B (61 aa).

Residues C24, C27, C40, and C43 each coordinate Zn(2+).

Belongs to the universal ribosomal protein uS14 family. Zinc-binding uS14 subfamily. Part of the 30S ribosomal subunit. Contacts proteins S3 and S10. Zn(2+) is required as a cofactor.

In terms of biological role, binds 16S rRNA, required for the assembly of 30S particles and may also be responsible for determining the conformation of the 16S rRNA at the A site. The chain is Small ribosomal subunit protein uS14B from Oceanobacillus iheyensis (strain DSM 14371 / CIP 107618 / JCM 11309 / KCTC 3954 / HTE831).